The chain runs to 332 residues: Fructose-1,6-bisphosphatase class 1 (332 aa).

Glutamate 89, aspartate 110, leucine 112, and aspartate 113 together coordinate Mg(2+). Substrate-binding positions include 113-116, asparagine 206, tyrosine 239, 257-259, and lysine 269; these read DGSS and YLY. Glutamate 275 contacts Mg(2+).

This sequence belongs to the FBPase class 1 family. Homotetramer. Requires Mg(2+) as cofactor.

It is found in the cytoplasm. It catalyses the reaction beta-D-fructose 1,6-bisphosphate + H2O = beta-D-fructose 6-phosphate + phosphate. It participates in carbohydrate biosynthesis; gluconeogenesis. The sequence is that of Fructose-1,6-bisphosphatase class 1 from Citrobacter koseri (strain ATCC BAA-895 / CDC 4225-83 / SGSC4696).